A 269-amino-acid polypeptide reads, in one-letter code: 3-methyl-2-oxobutanoate hydroxymethyltransferase (269 aa).

Mg(2+) is bound by residues Asp-48 and Asp-87. 3-methyl-2-oxobutanoate is bound by residues 48 to 49 (DS), Asp-87, and Lys-116. Position 118 (Glu-118) interacts with Mg(2+). The Proton acceptor role is filled by Glu-185.

This sequence belongs to the PanB family. In terms of assembly, homodecamer; pentamer of dimers. Mg(2+) is required as a cofactor.

It localises to the cytoplasm. The catalysed reaction is 3-methyl-2-oxobutanoate + (6R)-5,10-methylene-5,6,7,8-tetrahydrofolate + H2O = 2-dehydropantoate + (6S)-5,6,7,8-tetrahydrofolate. Its pathway is cofactor biosynthesis; (R)-pantothenate biosynthesis; (R)-pantoate from 3-methyl-2-oxobutanoate: step 1/2. Its function is as follows. Catalyzes the reversible reaction in which hydroxymethyl group from 5,10-methylenetetrahydrofolate is transferred onto alpha-ketoisovalerate to form ketopantoate. This chain is 3-methyl-2-oxobutanoate hydroxymethyltransferase, found in Campylobacter curvus (strain 525.92).